Consider the following 1798-residue polypeptide: Non-reducing polyketide synthase nscA (1798 aa).

Residues 25 to 256 (RRLDQHSKDR…PLPVYDGLCH (232 aa)) form an N-terminal acylcarrier protein transacylase domain (SAT) region. Positions 392-825 (SSKLAIVGMA…GGNTTLLLED (434 aa)) constitute a Ketosynthase family 3 (KS3) domain. The disordered stretch occupies residues 436-455 (NTHYDPTGKTENTTQTPYGN). Polar residues predominate over residues 444 to 453 (KTENTTQTPY). Catalysis depends on for beta-ketoacyl synthase activity residues C565, H700, and H743. Residues 931 to 1230 (FTGQGAYYHG…PSASAMSSCR (300 aa)) are malonyl-CoA:ACP transacylase (MAT) domain. Positions 1322 to 1458 (HQITAETVEA…AMIRFEDPVA (137 aa)) are N-terminal hotdog fold. Residues 1322–1632 (HQITAETVEA…FRRVPRLLMD (311 aa)) enclose the PKS/mFAS DH domain. H1354 (proton acceptor; for dehydratase activity) is an active-site residue. A product template (PT) domain region spans residues 1390-1628 (HMNLTDVEVL…GMIRFRRVPR (239 aa)). The segment at 1486 to 1632 (ASRLSKPLAY…FRRVPRLLMD (147 aa)) is C-terminal hotdog fold. The active-site Proton donor; for dehydratase activity is D1543. Residues 1685-1719 (MASKAPEPAPLLATSSESSTPKESPIVTPAESERA) form a disordered region. The span at 1698 to 1709 (TSSESSTPKESP) shows a compositional bias: low complexity. Positions 1721–1798 (PVDNNMISQC…EMTAWIEEYC (78 aa)) constitute a Carrier domain. At S1758 the chain carries O-(pantetheine 4'-phosphoryl)serine.

It depends on pantetheine 4'-phosphate as a cofactor.

It participates in secondary metabolite biosynthesis. In terms of biological role, non-reducing polyketide synthase; part of the gene cluster that mediates the biosynthesis of neosartoricin B, a prenylated anthracenone that probably exhibits T-cell antiproliferative activity, suggestive of a physiological role as an immunosuppressive agent. The non-reducing polyketide synthase nscA probably synthesizes and cyclizes the decaketide backbone. The hydrolase nscB then mediates the product release through hydrolysis followed by spontaneous decarboxylation. The prenyltransferase nscD catalyzes the addition of the dimethylallyl group to the aromatic C5. The FAD-dependent monooxygenase nscC is then responsible for the stereospecific hydroxylation at C2. Neosartoricin B can be converted into two additional compounds neosartoricins C and D. Neosartoricin C is a spirocyclic compound that is cyclized through the attack of C3 hydroxyl on C14, followed by dehydration. On the other hand, neosartoricin D is a further cyclized compound in which attack of C2 on C14 in neosartoricin C results in the formation of the acetal-containing dioxabicyclo-octanone ring. Both of these compounds are novel and possibly represent related metabolites of the gene cluster. The protein is Non-reducing polyketide synthase nscA of Arthroderma benhamiae (strain ATCC MYA-4681 / CBS 112371) (Trichophyton mentagrophytes).